We begin with the raw amino-acid sequence, 172 residues long: Ribosome maturation factor RimM (172 aa).

Positions 96-168 (EGEFYYHQII…RVDVELMEGL (73 aa)) constitute a PRC barrel domain.

The protein belongs to the RimM family. Binds ribosomal protein uS19.

The protein localises to the cytoplasm. An accessory protein needed during the final step in the assembly of 30S ribosomal subunit, possibly for assembly of the head region. Essential for efficient processing of 16S rRNA. May be needed both before and after RbfA during the maturation of 16S rRNA. It has affinity for free ribosomal 30S subunits but not for 70S ribosomes. The protein is Ribosome maturation factor RimM of Streptococcus pyogenes serotype M18 (strain MGAS8232).